A 345-amino-acid polypeptide reads, in one-letter code: Fe(3+) ions import ATP-binding protein FbpC (345 aa).

An ABC transporter domain is found at 3-233 (LSLKAATVRF…PADEFVARFL (231 aa)). 35 to 42 (GPSGSGKS) lines the ATP pocket.

It belongs to the ABC transporter superfamily. Fe(3+) ion importer (TC 3.A.1.10) family. The complex is composed of two ATP-binding proteins (FbpC), two transmembrane proteins (FbpB) and a solute-binding protein (FbpA).

The protein localises to the cell membrane. It carries out the reaction Fe(3+)(out) + ATP + H2O = Fe(3+)(in) + ADP + phosphate + H(+). Functionally, part of the ABC transporter complex FbpABC involved in Fe(3+) ions import. Responsible for energy coupling to the transport system. The sequence is that of Fe(3+) ions import ATP-binding protein FbpC from Streptomyces avermitilis (strain ATCC 31267 / DSM 46492 / JCM 5070 / NBRC 14893 / NCIMB 12804 / NRRL 8165 / MA-4680).